We begin with the raw amino-acid sequence, 315 residues long: Secreted frizzled-related protein 3 (315 aa).

The N-terminal stretch at 1-21 is a signal peptide; that stretch reads MWRGLPALALAALLLLGRAPA. The FZ domain occupies 22–142; it reads GRAAACEPVR…LYDRGVCISP (121 aa). Disulfide bonds link C27–C88, C35–C81, C72–C111, C100–C139, and C104–C128. Residue N41 is glycosylated (N-linked (GlcNAc...) asparagine). In terms of domain architecture, NTR spans 170-290; that stretch reads CKCKPIKATQ…WDQKLRHLGK (121 aa). A disordered region spans residues 284 to 315; sequence KLRHLGKGKGEPGQSDSALKTGKPGNARQTRS.

Belongs to the secreted frizzled-related protein (sFRP) family.

It is found in the secreted. In terms of biological role, soluble frizzled-related proteins (sFRPS) function as modulators of Wnt signaling through direct interaction with Wnts. They have a role in regulating cell growth and differentiation in specific cell types. SFRP3/FRZB appears to be involved in limb skeletogenesis. Antagonist of Wnt8 signaling. Regulates chondrocyte maturation and long bone development. This chain is Secreted frizzled-related protein 3 (FRZB), found in Gallus gallus (Chicken).